The chain runs to 430 residues: GTPase Obg (430 aa).

An Obg domain is found at 1–158; it reads MFVDQVKISL…LEVTLELKLL (158 aa). A disordered region spans residues 118-145; sequence RGGRGGRGNSRFATPRNPAPDFSENGEP. The OBG-type G domain maps to 159–329; sequence ADVGLVGFPS…LLYQIADKLE (171 aa). Residues 165–172, 190–194, 212–215, 282–285, and 310–312 contribute to the GTP site; these read GFPSVGKS, FTTIK, DLPG, NKMD, and STI. Mg(2+) is bound by residues Ser-172 and Thr-192. The 79-residue stretch at 352–430 folds into the OCT domain; it reads KHTPSADKFT…ILGGEFEFVE (79 aa).

This sequence belongs to the TRAFAC class OBG-HflX-like GTPase superfamily. OBG GTPase family. As to quaternary structure, monomer. Mg(2+) serves as cofactor.

The protein resides in the cytoplasm. An essential GTPase which binds GTP, GDP and possibly (p)ppGpp with moderate affinity, with high nucleotide exchange rates and a fairly low GTP hydrolysis rate. Plays a role in control of the cell cycle, stress response, ribosome biogenesis and in those bacteria that undergo differentiation, in morphogenesis control. This Staphylococcus epidermidis (strain ATCC 12228 / FDA PCI 1200) protein is GTPase Obg.